Here is a 199-residue protein sequence, read N- to C-terminus: 3-isopropylmalate dehydratase small subunit (199 aa).

Belongs to the LeuD family. LeuD type 1 subfamily. In terms of assembly, heterodimer of LeuC and LeuD.

The catalysed reaction is (2R,3S)-3-isopropylmalate = (2S)-2-isopropylmalate. Its pathway is amino-acid biosynthesis; L-leucine biosynthesis; L-leucine from 3-methyl-2-oxobutanoate: step 2/4. Its function is as follows. Catalyzes the isomerization between 2-isopropylmalate and 3-isopropylmalate, via the formation of 2-isopropylmaleate. This Pseudoalteromonas translucida (strain TAC 125) protein is 3-isopropylmalate dehydratase small subunit.